We begin with the raw amino-acid sequence, 137 residues long: MIEEKKELKKRRVLQMARFYGAAAFTLITMRLISRAIKVRKYVPSIFQQNYKLPPFSQRNEAMSALTYASAASIGTFSTLIFGFCWALDISTAREFVFKTREFMSLPQALETDTSMDEETSKLTKQLQDLLSSENNK.

The next 2 helical transmembrane spans lie at 20–37 and 66–88; these read YGAAAFTLITMRLISRAI and LTYASAASIGTFSTLIFGFCWAL.

It belongs to the AIM11 family.

The protein localises to the membrane. The protein is Altered inheritance of mitochondria protein 11 (AIM11) of Saccharomyces cerevisiae (strain RM11-1a) (Baker's yeast).